The primary structure comprises 406 residues: Tryptophan synthase beta chain (406 aa).

Lys-99 is subject to N6-(pyridoxal phosphate)lysine.

It belongs to the TrpB family. As to quaternary structure, tetramer of two alpha and two beta chains. The cofactor is pyridoxal 5'-phosphate.

It catalyses the reaction (1S,2R)-1-C-(indol-3-yl)glycerol 3-phosphate + L-serine = D-glyceraldehyde 3-phosphate + L-tryptophan + H2O. Its pathway is amino-acid biosynthesis; L-tryptophan biosynthesis; L-tryptophan from chorismate: step 5/5. The beta subunit is responsible for the synthesis of L-tryptophan from indole and L-serine. The polypeptide is Tryptophan synthase beta chain (Sinorhizobium fredii (strain NBRC 101917 / NGR234)).